The sequence spans 173 residues: ATP synthase subunit delta (173 aa).

This sequence belongs to the ATPase delta chain family. In terms of assembly, F-type ATPases have 2 components, F(1) - the catalytic core - and F(0) - the membrane proton channel. F(1) has five subunits: alpha(3), beta(3), gamma(1), delta(1), epsilon(1). F(0) has three main subunits: a(1), b(2) and c(10-14). The alpha and beta chains form an alternating ring which encloses part of the gamma chain. F(1) is attached to F(0) by a central stalk formed by the gamma and epsilon chains, while a peripheral stalk is formed by the delta and b chains.

The protein localises to the cell inner membrane. Functionally, f(1)F(0) ATP synthase produces ATP from ADP in the presence of a proton or sodium gradient. F-type ATPases consist of two structural domains, F(1) containing the extramembraneous catalytic core and F(0) containing the membrane proton channel, linked together by a central stalk and a peripheral stalk. During catalysis, ATP synthesis in the catalytic domain of F(1) is coupled via a rotary mechanism of the central stalk subunits to proton translocation. This protein is part of the stalk that links CF(0) to CF(1). It either transmits conformational changes from CF(0) to CF(1) or is implicated in proton conduction. This chain is ATP synthase subunit delta, found in Campylobacter jejuni subsp. jejuni serotype O:2 (strain ATCC 700819 / NCTC 11168).